The chain runs to 251 residues: 5'-nucleotidase SurE (251 aa).

The a divalent metal cation site is built by aspartate 8, aspartate 9, serine 39, and asparagine 90.

Belongs to the SurE nucleotidase family. Requires a divalent metal cation as cofactor.

The protein localises to the cytoplasm. The catalysed reaction is a ribonucleoside 5'-phosphate + H2O = a ribonucleoside + phosphate. In terms of biological role, nucleotidase that shows phosphatase activity on nucleoside 5'-monophosphates. The polypeptide is 5'-nucleotidase SurE (Legionella pneumophila subsp. pneumophila (strain Philadelphia 1 / ATCC 33152 / DSM 7513)).